We begin with the raw amino-acid sequence, 183 residues long: Putative NAD(P)H nitroreductase YdjA (183 aa).

FMN is bound by residues 10 to 12 (RRS), Arg-35, and His-39. 121-126 (AAVAQG) contacts NAD(+). 131-133 (WRS) contributes to the FMN binding site.

Belongs to the nitroreductase family. As to quaternary structure, homodimer. FMN serves as cofactor.

The sequence is that of Putative NAD(P)H nitroreductase YdjA (ydjA) from Escherichia coli O157:H7.